We begin with the raw amino-acid sequence, 520 residues long: N-acetylgalactosamine-6-sulfatase (520 aa).

The signal sequence occupies residues 1 to 23 (MAACTAAQQLLLVLSALGLLAAG). Residues 24–377 (APQPPNIVLL…PTMLKGQMMD (354 aa)) form a catalytic domain region. 3 residues coordinate Ca(2+): D36, D37, and C76. C76 acts as the Nucleophile in catalysis. Residue C76 is modified to 3-oxoalanine (Cys). H139 is a catalytic residue. N201 carries N-linked (GlcNAc...) asparagine glycosylation. Ca(2+) is bound by residues D286 and N287. The cysteines at positions 306 and 417 are disulfide-linked. N421 carries N-linked (GlcNAc...) asparagine glycosylation. 2 cysteine pairs are disulfide-bonded: C487–C516 and C499–C505.

The protein belongs to the sulfatase family. As to quaternary structure, homodimer. Ca(2+) serves as cofactor. The conversion to 3-oxoalanine (also known as C-formylglycine, FGly), of a serine or cysteine residue in prokaryotes and of a cysteine residue in eukaryotes, is critical for catalytic activity. In terms of tissue distribution, widely expressed. Higher expression in liver and kidney.

It localises to the lysosome. The enzyme catalyses Hydrolysis of the 6-sulfate groups of the N-acetyl-D-galactosamine 6-sulfate units of chondroitin sulfate and of the D-galactose 6-sulfate units of keratan sulfate.. The protein is N-acetylgalactosamine-6-sulfatase (Galns) of Mus musculus (Mouse).